A 95-amino-acid polypeptide reads, in one-letter code: Small ribosomal subunit protein bS6 (95 aa).

It belongs to the bacterial ribosomal protein bS6 family.

Functionally, binds together with bS18 to 16S ribosomal RNA. This chain is Small ribosomal subunit protein bS6, found in Thermoanaerobacter pseudethanolicus (strain ATCC 33223 / 39E) (Clostridium thermohydrosulfuricum).